Consider the following 283-residue polypeptide: ATP phosphoribosyltransferase (283 aa).

It belongs to the ATP phosphoribosyltransferase family. Long subfamily. The cofactor is Mg(2+).

Its subcellular location is the cytoplasm. The enzyme catalyses 1-(5-phospho-beta-D-ribosyl)-ATP + diphosphate = 5-phospho-alpha-D-ribose 1-diphosphate + ATP. The protein operates within amino-acid biosynthesis; L-histidine biosynthesis; L-histidine from 5-phospho-alpha-D-ribose 1-diphosphate: step 1/9. Feedback inhibited by histidine. Its function is as follows. Catalyzes the condensation of ATP and 5-phosphoribose 1-diphosphate to form N'-(5'-phosphoribosyl)-ATP (PR-ATP). Has a crucial role in the pathway because the rate of histidine biosynthesis seems to be controlled primarily by regulation of HisG enzymatic activity. The sequence is that of ATP phosphoribosyltransferase from Nocardia farcinica (strain IFM 10152).